A 225-amino-acid chain; its full sequence is uncharacterized protein (225 aa).

This is an uncharacterized protein from Mycoplasma pneumoniae (strain ATCC 29342 / M129 / Subtype 1) (Mycoplasmoides pneumoniae).